Reading from the N-terminus, the 489-residue chain is DNA-dependent metalloprotease SPRTN (489 aa).

Position 1 is an N-acetylmethionine (Met-1). Residues 45-212 (LQALFVQFND…KTCGGTYIKI (168 aa)) enclose the SprT-like domain. His-111 provides a ligand contact to Zn(2+). Residue Glu-112 is part of the active site. Residues His-115 and His-130 each contribute to the Zn(2+) site. Lys-230 carries the post-translational modification N6-acetyllysine. Residues 253 to 261 (FSGKGYVLG) carry the SHP-box motif. A Phosphoserine modification is found at Ser-268. Lys-303 is covalently cross-linked (Glycyl lysine isopeptide (Lys-Gly) (interchain with G-Cter in SUMO2)). Residues 325–332 (QNVLSNYF) carry the PIP-box motif. A Glycyl lysine isopeptide (Lys-Gly) (interchain with G-Cter in SUMO2); alternate cross-link involves residue Lys-341. Lys-341 is covalently cross-linked (Glycyl lysine isopeptide (Lys-Gly) (interchain with G-Cter in ubiquitin); alternate). Residues 357–409 (GNIPKNSVSSSSQRRVSSSKISLRNSSKVTESASVMPSQDVSGSEDTFPNKRP) are disordered. A Glycyl lysine isopeptide (Lys-Gly) (interchain with G-Cter in SUMO2) cross-link involves residue Lys-361. The span at 363–383 (SVSSSSQRRVSSSKISLRNSS) shows a compositional bias: low complexity. Residues Ser-373 and Ser-374 each carry the phosphoserine; by CHEK1 modification. A Glycyl lysine isopeptide (Lys-Gly) (interchain with G-Cter in SUMO2); alternate cross-link involves residue Lys-376. Lys-376 is covalently cross-linked (Glycyl lysine isopeptide (Lys-Gly) (interchain with G-Cter in ubiquitin); alternate). Ser-383 carries the post-translational modification Phosphoserine; by CHEK1. The span at 384-403 (KVTESASVMPSQDVSGSEDT) shows a compositional bias: polar residues. The Nuclear localization signal motif lies at 402 to 413 (DTFPNKRPRLED). A Glycyl lysine isopeptide (Lys-Gly) (interchain with G-Cter in ubiquitin) cross-link involves residue Lys-414. Residues Lys-423 and Lys-424 each participate in a glycyl lysine isopeptide (Lys-Gly) (interchain with G-Cter in SUMO2) cross-link. The interval 428–453 (KSSGNDPKYSTTTAQNSSSSSSQSKM) is disordered. A Glycyl lysine isopeptide (Lys-Gly) (interchain with G-Cter in ubiquitin) cross-link involves residue Lys-435. The span at 437–451 (STTTAQNSSSSSSQS) shows a compositional bias: low complexity. The UBZ4-type zinc finger occupies 453–480 (MVNCPVCQNEVLESQINEHLDWCLEGDS). 4 residues coordinate Zn(2+): Cys-456, Cys-459, His-471, and Cys-475. Lys-484 is covalently cross-linked (Glycyl lysine isopeptide (Lys-Gly) (interchain with G-Cter in SUMO2)).

This sequence belongs to the Spartan family. Homodimer. Interacts (VIA PIP-box) with PCNA (when ubiquitinated). Interacts (via its SHP-box) with VCP/p97. Interacts with RAD18. Interacts with KCTD13 and POLD3. It depends on Zn(2+) as a cofactor. In terms of processing, autocatalytically cleaved in response to double-stranded DNA-binding: autocatalytic cleavage takes place in trans and leads to inactivation. Post-translationally, monoubiquitinated; monoubiquitination promotes exclusion from chromatin. Deubiquitinated by VCPIP1: deubiquitination is required for subsequent acetylation and recruitment to chromatin and DNA damage sites. Acetylated following deubiquitination by VCPIP1, leading to recruitment to chromatin and DNA damage sites. In terms of processing, phosphorylation by CHEK1 promotes recruitment to chromatin.

It localises to the nucleus. It is found in the chromosome. With respect to regulation, DNA-binding activates the protease activity: single-stranded DNA-binding specifically activates ability to cleave covalent DNA-protein cross-links (DPCs). In contrast, double-stranded DNA-binding specifically activates autocatalytic cleavage, and subsequent inactivation. Functionally, DNA-dependent metalloendopeptidase that mediates the proteolytic cleavage of covalent DNA-protein cross-links (DPCs) during DNA synthesis, thereby playing a key role in maintaining genomic integrity. DPCs are highly toxic DNA lesions that interfere with essential chromatin transactions, such as replication and transcription, and which are induced by reactive agents, such as UV light or formaldehyde. Associates with the DNA replication machinery and specifically removes DPCs during DNA synthesis. Catalyzes proteolytic cleavage of the HMCES DNA-protein cross-link following unfolding by the BRIP1/FANCJ helicase. Acts as a pleiotropic protease for DNA-binding proteins cross-linked with DNA, such as TOP1, TOP2A, histones H3 and H4. Mediates degradation of DPCs that are not ubiquitinated, while it is not able to degrade ubiquitinated DPCs. SPRTN activation requires polymerase collision with DPCs followed by helicase bypass of DPCs. Involved in recruitment of VCP/p97 to sites of DNA damage. Also acts as an activator of CHEK1 during normal DNA replication by mediating proteolytic cleavage of CHEK1, thereby promoting CHEK1 removal from chromatin and subsequent activation. Does not activate CHEK1 in response to DNA damage. May also act as a 'reader' of ubiquitinated PCNA: recruited to sites of UV damage and interacts with ubiquitinated PCNA and RAD18, the E3 ubiquitin ligase that monoubiquitinates PCNA. Facilitates chromatin association of RAD18 and is required for efficient PCNA monoubiquitination, promoting a feed-forward loop to enhance PCNA ubiquitination and translesion DNA synthesis. This chain is DNA-dependent metalloprotease SPRTN, found in Homo sapiens (Human).